Reading from the N-terminus, the 3814-residue chain is MDPQQRLLLEVVFEAFEDAGISLEEMNGSRTSVLCGAFTNDYNAMLTKDLEYYPKYTVTGTGNAILANRISYAFNLKGMSLTIDTACSSSLVGFHLGAQAILNGDCEMAIIVGSALHFDPNIFITMTDLGMLSQEGRCRAFDAGGKGYARGEGICAVILRGQMQAEMHGDHIRALVRATGSNHDGMTQGITLPSSEAQEALIRRTYQSCGLDPADTQYVEAHGTGTARGDPLEMRAIGACFSSPRRSDPLYVGSVKSNIGHAEGASGLAGLIKASMALEKGQIPPNMHFKHPNPEIAFADWQIEVPTRVIDFPSNAQGTRRVSINSFGYGGSNAHVILESYDQLPHVQPTDPGAHRPYLVPLTSHTEKAGKLMVEKLGAYLDDRPSTLVVDLAHSLATRRTLHDERSFAVGASAADIRTQLSEGLPAWTKVRREPVRLGFVFTGQGAQWHAMGRQLLEQCPFFRHTLERADRILATLPDKPEWSIVTELTQPKETSRLGETRLSQPICTALQLAILDLLKSWGIVPQATVGHSSGEVAGAYAAGILTFENAMYAAYYRGLHMSSPRSSTSPGRDAIPGAMLAVGLGEAEAMAETESYRGRAVVAAVNSPSSVTLSGDADAIAEIKERLDAQKVFARRLQVQQAFHSHHMDPLAPAYEEALRNCPGFAATAPACRFFSSVTARVANPDTMGPQYWSANMTGTVRFSDALIGVLLDDLEDPNVDALVEIGPHPALKGPARQVMKSVNMDLPYFASLSRGVPDYEGILALAGQLFQLGYPVDLTAVNSDTYLADSDPPRQTHRAQRIPDLPLYAWDHSDRYWAETRLIKEHRLRPHHHPILGAKMPGSIEGHVRWRNYLRTRELPWLVDHMVDNKVTFPAAGYVTLAIEAALRMKDTVMAAQGVSLRNLSIKSALVLDESEMGSEVVVDIRPQTTSAKSRSDTWLEFTIFSYNGSLTCAEHCTGLISISTATTADGAPSRKPYRQHPQPQPGRMSTASFPAQSFYTHLRQLGLQYGEHFQLLTGTIESGAGFSSSMLTFEPAQYAAQPADRTVVHPTMLDAAFHTIFAALEGLSGRTLQTAFVPTFVHSLDIFPAMLSGMDAPRPLEARVASSAHFSGPRAAVSDVDMYRQGDGEALLSLAGLRLTSLSNGRAAHNRSLFFRTRWQPAFDQLAEDSPALQDQTLAGVLDLFLHQHPDTKILHFTPDINQTRQLVGCLVDQGSERRRFRSITPVATGGAFAEELERVQREQPGCLVTGEPEPEAYDLVIVSEAQEAHPLPFLRDGGYVISHGSAIDETNLTKRFQCADVEVWQRTRETRRDVRPLLLAMAPTPSRRTLDLASHIRAANPDRPVSCLGLQELLARMTGVEDVVVLASLDRDLLSGLDPQGELFFEATRALLIRPDVNVLWLLQDTTAPRHVDSLGSSMIVGLARTARSENPSSRIVTLDLPVDWSPAAVVPWLPQLLDPEVHEDEFHLRDQVLSIPRIENDDGLNSKVPGGVSSGPRPESFSAQRPMRLAIGQAGLLETLVWEDDVEILNEPLPDDEIEIEVKASALNFRDVAAAMGIIDDHRLGDECAGLVRRVGQQVDPAAFQPGDRVVALRPGRGAHRSVVRNPACHCFRLGPMPFEQATALPLILTTAYYSLVETARLQPGETVLIHCAAGGVGQMAIQIAQQIGARIIATVGSPAKRDLLQSRYGLTEAHILSSRDASFVDGVMQLTGGRGVDVVLNSLSGKLLHASWNSLATFGRFIEIGKRDIHENTLIEMDPFRRNVLFASVDMVTIYAQNRALGARIFDHCCNMVHEGRIQLPATILALPYSEAVQGFRLLQMGRHTGKVVLVAEDQGDQVPVSPPTWNAVANRLSPDKTYLLVGGLGGLGRTLTEWLVQRQAKRIAFLSRSGADRPEAQATVAWLRARGIAVSVHAADVADPGHVQACIKAIPDLGGVFHAAMVLADAPLERMSYAQWHRCVQPKVRGAYNLHCATVHCPLDFFVCFSSISAFFGSKAQANYAAANVYLDSLVRYRRQLGLPASSMNCGRITGVGVAAADASLERFMVEEGFDGVNRQELLYQIEEAIFSADHPAPLSGRGTDMSQTLTGVTLERDDVYWAQRSIFRNLYRNHDVEGQSRPGADEVNLSVQLARTIDLSDRVALLMERFVDKVSVVLGLSPESLKPADPVYGLDSLVAVELRNWFTKSVGVDIALFDVLGSPSIQALVEKAIGLFDAQVQQQQQQQQSVQSSSAPSNDDQSPTFNKNLDSQDPSTSLQIPKADCSRPLPMSTFQNRLWVSHRFAADKSRINLAITMHLRGQADHGILEQALSELIARNPILRTAYGEGEAQDEQRVMAPRPFHLGFHDLSKSGPSEGPTASLETLVGSLKRKEMRIEEGEVLEATLVQRSSTECALVLIMHHICTDRSNSQSFVRQLAALYDALRQGRSLSTIPAPKVTYADFTLWHNQLLTSPSMGKGVEYWKQTLAGMPASCQLLPFAKGERPSWDEYGRETVVAALSARQLQRMKRICSQARTSPFHFLLAAFRAFLHRYTADEDLTILMVDGNRPHADLGEVLGFFVNMAPIRCRDACAGSFETLLKTIGGRVLEAMAHSHVPFDVIVAQTQGARTPAHFPVSQVLVNYQQPDEQARYQTTDFTFQGTEVQNMPTGCELSLQAREDAEHGLQLELEYATALYEDGDMRCFFDNFQTFVTSLIQDHRQSIPEVRLAGTLELERLALHCWNSHPPDHGWQPLNLPRRIVEVAETQPRAIAITTSAGEAVTYQDLVASARRVAFSLQNLGIGPGQVVGILASPGIELVTAMLGALFNRCGYVPLDPTMAVGRLAYIVGDSGMQLLLVDEESDPLASSLGRESPSLPNVMSIKNATRAAWPADLPRSLPTDPFYMMYTSGSTGTPKGVPLTQENVGEMLAAMQARFNFTREDRFLHQISPSFDLSVVELFSPLCVGAKLCIATKTTRSDPRLLGDYLRQASVTVTYFTPTQFALVLEHSGASLVACPDYRIALLCGERLPTRLAEAFHQLACAATLYNAWGPTEAAVQTTIHRVQWPADQTLNIPIGHAVGSCRHYIVDAAMNPLPVGFVGEICIGGPQVARGYWNRAESNRQQFLRNPFASPDDHRRGWTRLFRTGDLGRFLPDGQLEFLGRIAGDKQIKLRGFRIDLGEIEHVLHRHSGTPDGQGIVDLAVIAQSAPEDADALTDDRWLVAFIVPKQAIPTEAAKRAYATLLHTRAKPYLNRYMLPAAYQFVDQLPTTASGKTDRRALGASQAPGTPPQHGAGPAAASTLDPAQAQAQDRADEEVGDRTMATVTRVWQEVLRLDHDIPVEPTSNFFDMGGSSTLLLRLQGKLQTTLSIPISLQEMVRRPTLVQLVELVHSKVPREGQPPPTPGSRPEEDVVDWAQETTLPAETRYHPPSAPMSPGGRDILMTGAESFTGIHLLAQLLTSHPSGTIHLLGTHHPWDHAQVFQRLQEYNLLNATLTPEQILTRLRTIPGSLAEGSHFGLSPRAFEALGRSIATIYHLASEVSLLKTYHDLKPINTAAILPLIELARWGGPSPIHYLSTWSVPHLQLWTAPPTTPAVVHEASAGHFTPPPTADQGYFKSRWAAEMLLTHAAARGFPVTIYRASAVTGNPTTGLPAPAGDFVRSLILDMLRHRLVPRFARESPAPVVVDLVPVNYLTALLAHLAQRPRAAAAEGPRPAGVEIFHLTNPTPLPLDQLPGLTGSIRGDATAGRVVSVDDWLAAVSGSDPAAAAADEDEQLRVQVAGGYFRRGHQMFALDRRRTDAALGGVTEGWVDCPPVDANYLRALWLQKV.

The region spanning 1–340 is the Ketosynthase family 3 (KS3) domain; sequence MDPQQRLLLE…GSNAHVILES (340 aa). Active-site for beta-ketoacyl synthase activity residues include cysteine 87, histidine 222, and histidine 261. Positions 441 to 758 are malonyl-CoA:ACP transacylase (MAT) domain; it reads VFTGQGAQWH…PYFASLSRGV (318 aa). Catalysis depends on serine 533, which acts as the For malonyltransferase activity. Residues 835 to 970 are N-terminal hotdog fold; it reads HPILGAKMPG…GLISISTATT (136 aa). The tract at residues 835–1149 is dehydratase (DH) domain; sequence HPILGAKMPG…LRLTSLSNGR (315 aa). The region spanning 835-1151 is the PKS/mFAS DH domain; it reads HPILGAKMPG…LTSLSNGRAA (317 aa). Histidine 867 acts as the Proton acceptor; for dehydratase activity in catalysis. Residues 970 to 993 form a disordered region; it reads TADGAPSRKPYRQHPQPQPGRMST. A C-terminal hotdog fold region spans residues 991-1151; the sequence is MSTASFPAQS…LTSLSNGRAA (161 aa). Aspartate 1057 serves as the catalytic Proton donor; for dehydratase activity. Residues 1520–1836 are enoyl reductase (ER) domain; that stretch reads GLLETLVWED…MGRHTGKVVL (317 aa). The tract at residues 1864–2036 is ketoreductase (KR) domain; it reads TYLLVGGLGG…PASSMNCGRI (173 aa). In terms of domain architecture, Carrier 1 spans 2141–2220; the sequence is IDLSDRVALL…ALVEKAIGLF (80 aa). An O-(pantetheine 4'-phosphoryl)serine modification is found at serine 2180. Low complexity predominate over residues 2228 to 2238; the sequence is QQQQQSVQSSS. A disordered region spans residues 2228–2270; that stretch reads QQQQQSVQSSSAPSNDDQSPTFNKNLDSQDPSTSLQIPKADCS. Residues 2239–2263 are compositionally biased toward polar residues; the sequence is APSNDDQSPTFNKNLDSQDPSTSLQ. The condensation (C) domain 7 stretch occupies residues 2273–2718; sequence LPMSTFQNRL…PEVRLAGTLE (446 aa). Residues 2738-3149 form an adenylation (A) domain 8 region; the sequence is PLNLPRRIVE…DGQLEFLGRI (412 aa). Residues 3257-3304 form a disordered region; it reads SGKTDRRALGASQAPGTPPQHGAGPAAASTLDPAQAQAQDRADEEVGD. The Carrier 2 domain maps to 3304 to 3379; sequence DRTMATVTRV…QLVELVHSKV (76 aa). Position 3339 is an O-(pantetheine 4'-phosphoryl)serine (serine 3339). The thioesterase (TE) domain stretch occupies residues 3428 to 3680; sequence MTGAESFTGI…VDLVPVNYLT (253 aa).

In the C-terminal section; belongs to the NRP synthetase family.

It participates in secondary metabolite biosynthesis. Hybrid PKS-NRPS synthetase; part of the gene cluster that mediates the biosynthesis of pyranoviolin A, a pyranonigrin analog with a C-3 methoxy group. Initially, the PKS portion of pyvA synthesizes C-10 carbon chain from 5 molecules of malonyl-CoA, which is then condensed with the thiolation (T) domain-bound glycine activated by the adenylation (A) domain. The subsequent chain release by Dieckmann condensation (DKC) could be catalyzed by the TE domain present at the C-terminus of pyvA and/or the alpha/beta hydrolase pyvD, installing the tetramic acid moiety. The FAD-dependent monooxygenase pyvC next epoxidizes one of the olefins of the polyketide part, and the epoxide ring-opening induces the dihydro-gamma-pyrone ring formation. The cytochrome P450 monooxygeanse pyvB would be responsible for the 2 consecutive reactions, in which the dihydro-gamma-pyrone is oxidized to gamma-pyrone and C-7 is hydroxylated to yield pyranonigrin F. Finally, the O-methyltransferase pyvH methylates the C-3 hydroxy group to complete the biosynthesis. The sequence is that of Hybrid PKS-NRPS synthetase pyvA from Aspergillus violaceofuscus (strain CBS 115571).